The following is a 353-amino-acid chain: Dihydroorotate dehydrogenase (quinone) (353 aa).

FMN contacts are provided by residues 67–71 (AGFDK) and Thr91. Residue Lys71 participates in substrate binding. Residue 116–120 (NRMGF) participates in substrate binding. Residues Asn144 and Asn177 each contribute to the FMN site. Residue Asn177 participates in substrate binding. Ser180 functions as the Nucleophile in the catalytic mechanism. Asn182 contributes to the substrate binding site. The FMN site is built by Lys215 and Thr243. 244-245 (NT) lines the substrate pocket. FMN-binding positions include Gly264, Gly293, and 314–315 (YT).

It belongs to the dihydroorotate dehydrogenase family. Type 2 subfamily. In terms of assembly, monomer. FMN is required as a cofactor.

It is found in the cell membrane. It carries out the reaction (S)-dihydroorotate + a quinone = orotate + a quinol. The protein operates within pyrimidine metabolism; UMP biosynthesis via de novo pathway; orotate from (S)-dihydroorotate (quinone route): step 1/1. In terms of biological role, catalyzes the conversion of dihydroorotate to orotate with quinone as electron acceptor. This Gloeobacter violaceus (strain ATCC 29082 / PCC 7421) protein is Dihydroorotate dehydrogenase (quinone).